Here is a 596-residue protein sequence, read N- to C-terminus: Polyphenol oxidase B, chloroplastic (596 aa).

The disordered stretch occupies residues 1–23; that stretch reads MASVVCNSSSSTTTTTLKTPFTS. The transit peptide at 1 to 87 directs the protein to the chloroplast; it reads MASVVCNSSS…ANAIPLAASA (87 aa). Over residues 8 to 23 the composition is skewed to low complexity; sequence SSSSTTTTTLKTPFTS. 2 disulfides stabilise this stretch: Cys98-Cys114 and Cys113-Cys182. Residues His181, His199, His208, His329, His333, and His371 each contribute to the Cu cation site. A cross-link (2'-(S-cysteinyl)-histidine (Cys-His)) is located at residues 185-199; sequence CNGAYIIGGKELQVH.

It belongs to the tyrosinase family. Requires Cu(2+) as cofactor.

The protein localises to the plastid. It is found in the chloroplast thylakoid lumen. The enzyme catalyses 2 catechol + O2 = 2 1,2-benzoquinone + 2 H2O. Catalyzes the oxidation of mono- and o-diphenols to o-diquinones. In Solanum lycopersicum (Tomato), this protein is Polyphenol oxidase B, chloroplastic.